A 263-amino-acid chain; its full sequence is Peptide methionine sulfoxide reductase A4, chloroplastic (263 aa).

The N-terminal 75 residues, 1–75 (MPPLLASTSS…GLGGLGGSPR (75 aa)), are a transit peptide targeting the chloroplast.

The protein belongs to the MsrA Met sulfoxide reductase family. Expressed in roots, stems, leaves and flowers.

Its subcellular location is the plastid. It is found in the chloroplast. The enzyme catalyses L-methionyl-[protein] + [thioredoxin]-disulfide + H2O = L-methionyl-(S)-S-oxide-[protein] + [thioredoxin]-dithiol. The catalysed reaction is [thioredoxin]-disulfide + L-methionine + H2O = L-methionine (S)-S-oxide + [thioredoxin]-dithiol. Its function is as follows. Catalyzes the reduction of methionine sulfoxide (MetSO) to methionine in proteins. Involved in abiotic and salt stress responses. Plays a protective role against oxidative stress by restoring activity to proteins that have been inactivated by methionine oxidation. MSRA family specifically reduces the MetSO S-enantiomer. The sequence is that of Peptide methionine sulfoxide reductase A4, chloroplastic from Oryza sativa subsp. japonica (Rice).